The sequence spans 238 residues: Transcription termination/antitermination protein NusG (238 aa).

The protein belongs to the NusG family.

Functionally, participates in transcription elongation, termination and antitermination. In Mycobacterium tuberculosis (strain CDC 1551 / Oshkosh), this protein is Transcription termination/antitermination protein NusG.